Reading from the N-terminus, the 723-residue chain is Enolase-phosphatase E1 (723 aa).

Substrate-binding positions include 126-127 and lysine 160; that span reads SS. The tract at residues 239 to 723 is disordered; that stretch reads GAGAKRKIDE…TPTPPIEAES (485 aa). Basic and acidic residues-rich tracts occupy residues 262–284 and 293–308; these read VKKD…DEPA and AAKE…KMEV. A compositionally biased stretch (low complexity) spans 311–320; sequence AAAAAAPPAD. Composition is skewed to basic and acidic residues over residues 322-406, 419-443, 468-479, 487-496, 511-565, and 577-593; these read AEEK…VVEE, AEEK…KPAE, EPAKEKPAEAEA, TKAEVVEKPA, SADK…KGEE, and VEAK…KSDA. Low complexity-rich tracts occupy residues 596–606 and 636–647; these read VSTTTTTTSTE and NGEAEPAAEAVV. Over residues 653-666 the composition is skewed to basic and acidic residues; that stretch reads GKHEEKGDSDKEND.

It belongs to the HAD-like hydrolase superfamily. MasA/MtnC family. As to quaternary structure, monomer.

The protein localises to the cytoplasm. It is found in the nucleus. The enzyme catalyses 5-methylsulfanyl-2,3-dioxopentyl phosphate + H2O = 1,2-dihydroxy-5-(methylsulfanyl)pent-1-en-3-one + phosphate. It participates in amino-acid biosynthesis; L-methionine biosynthesis via salvage pathway; L-methionine from S-methyl-5-thio-alpha-D-ribose 1-phosphate: step 3/6. The protein operates within amino-acid biosynthesis; L-methionine biosynthesis via salvage pathway; L-methionine from S-methyl-5-thio-alpha-D-ribose 1-phosphate: step 4/6. Functionally, bifunctional enzyme that catalyzes the enolization of 2,3-diketo-5-methylthiopentyl-1-phosphate (DK-MTP-1-P) into the intermediate 2-hydroxy-3-keto-5-methylthiopentenyl-1-phosphate (HK-MTPenyl-1-P), which is then dephosphorylated to form the acireductone 1,2-dihydroxy-3-keto-5-methylthiopentene (DHK-MTPene). This Culex quinquefasciatus (Southern house mosquito) protein is Enolase-phosphatase E1.